The sequence spans 406 residues: Arginine deiminase (406 aa).

The active-site Amidino-cysteine intermediate is Cys-396.

The protein belongs to the arginine deiminase family.

The protein localises to the cytoplasm. The enzyme catalyses L-arginine + H2O = L-citrulline + NH4(+). It functions in the pathway amino-acid degradation; L-arginine degradation via ADI pathway; carbamoyl phosphate from L-arginine: step 1/2. This Aliivibrio salmonicida (strain LFI1238) (Vibrio salmonicida (strain LFI1238)) protein is Arginine deiminase.